Reading from the N-terminus, the 167-residue chain is Ubiquitin-fold modifier-conjugating enzyme 1 (167 aa).

Cys-116 serves as the catalytic Glycyl thioester intermediate. A Glycyl lysine isopeptide (Lys-Gly) (interchain with G-Cter in UFM1) cross-link involves residue Lys-122.

It belongs to the ubiquitin-conjugating enzyme family. UFC1 subfamily. Interacts with UBA5 (via C-terminus). Interacts with UFL1. Interacts with UFM1. Interacts with KIRREL3. Post-translationally, ufmylated at Lys-122. Deufmylated by UFSP1.

Functionally, E2-like enzyme which specifically catalyzes the second step in ufmylation. Accepts the ubiquitin-like modifier UFM1 from the E1 enzyme UBA5 and forms an intermediate with UFM1 via a thioester linkage. Ufmylation is involved in various processes, such as ribosome recycling, response to DNA damage, interferon response or reticulophagy (also called ER-phagy). This chain is Ubiquitin-fold modifier-conjugating enzyme 1, found in Rattus norvegicus (Rat).